A 241-amino-acid chain; its full sequence is Uridylate kinase (241 aa).

An ATP-binding site is contributed by 9-10 (GS). G44 is a UMP binding site. ATP-binding residues include G45 and R49. Residues D66 and 114-120 (IMPGQTT) each bind UMP. ATP is bound by residues T140, Y146, and D149.

It belongs to the UMP kinase family. Homohexamer.

The protein resides in the cytoplasm. It catalyses the reaction UMP + ATP = UDP + ADP. It functions in the pathway pyrimidine metabolism; CTP biosynthesis via de novo pathway; UDP from UMP (UMPK route): step 1/1. With respect to regulation, inhibited by UTP. In terms of biological role, catalyzes the reversible phosphorylation of UMP to UDP. This Haloquadratum walsbyi (strain DSM 16790 / HBSQ001) protein is Uridylate kinase.